The primary structure comprises 484 residues: Poly(A) RNA polymerase GLD2 (484 aa).

S62 and S69 each carry phosphoserine. A Nuclear localization signal motif is present at residues 76–92; it reads KRISDEKAFPLDGKRQR. S95 carries the post-translational modification Phosphoserine. 2 residues coordinate Mg(2+): D213 and D215. The PAP-associated domain occupies 386–440; the sequence is SLGDLLLGFLKYYATEFDWNTQMISVREAKAIPRPDDMEWRNKYICVEEPFDGTN.

Belongs to the DNA polymerase type-B-like family. GLD2 subfamily. Interacts with CPEB1, CPEB2, CPSF1 and PABPC1. Interacts with QKI isoform QKI7; promoting recruitment to miRNA miR-122 and miR-122 stabilization. The cofactor is Mg(2+). Requires Mn(2+) as cofactor. In terms of tissue distribution, ubiquitous. In brain, it is highly expressed in the cerebral cortex, cerebellum, hippocampus and olfactory bulb.

The protein localises to the cytoplasm. It is found in the nucleus. The catalysed reaction is RNA(n) + ATP = RNA(n)-3'-adenine ribonucleotide + diphosphate. In terms of biological role, cytoplasmic poly(A) RNA polymerase that adds successive AMP monomers to the 3'-end of specific RNAs, forming a poly(A) tail. In contrast to the canonical nuclear poly(A) RNA polymerase, it only adds poly(A) to selected cytoplasmic mRNAs. Does not play a role in replication-dependent histone mRNA degradation. Adds a single nucleotide to the 3' end of specific miRNAs, monoadenylation stabilizes and prolongs the activity of some but not all miRNAs. The sequence is that of Poly(A) RNA polymerase GLD2 (Tent2) from Mus musculus (Mouse).